Reading from the N-terminus, the 462-residue chain is Glutamate--tRNA ligase 1 (462 aa).

Residues 8 to 18 carry the 'HIGH' region motif; sequence PSPTGYLHIGG. The 'KMSKS' region motif lies at 237–241; sequence KLSKR. K240 lines the ATP pocket.

Belongs to the class-I aminoacyl-tRNA synthetase family. Glutamate--tRNA ligase type 1 subfamily. Monomer.

Its subcellular location is the cytoplasm. The catalysed reaction is tRNA(Glu) + L-glutamate + ATP = L-glutamyl-tRNA(Glu) + AMP + diphosphate. Catalyzes the attachment of glutamate to tRNA(Glu) in a two-step reaction: glutamate is first activated by ATP to form Glu-AMP and then transferred to the acceptor end of tRNA(Glu). The protein is Glutamate--tRNA ligase 1 of Campylobacter hominis (strain ATCC BAA-381 / DSM 21671 / CCUG 45161 / LMG 19568 / NCTC 13146 / CH001A).